Here is a 587-residue protein sequence, read N- to C-terminus: Phosphatidate phosphatase APP1 (587 aa).

Disordered regions lie at residues 1–28 (MNSQGYDESSSSTAATSGPTSGDPRMGK) and 150–178 (PPHLEEDSGDLNDSQSSIESSLSSKSENR). Low complexity-rich tracts occupy residues 9-22 (SSSSTAATSGPTSG) and 163-174 (SQSSIESSLSSK). Residues 281–285 (DIDDT) carry the DXDXT motif motif. The interval 452-521 (QQRPMQMTKS…NRQLPNLDAN (70 aa)) is disordered. The segment at 467-483 (RRPPPPPIPSTQKPSLT) is interaction with SH3 domain of ABP1.

In terms of assembly, monomer. Interacts with ABP1. Mg(2+) is required as a cofactor. Post-translationally, N-glycosylated.

Its subcellular location is the cytoplasm. The protein localises to the cytoskeleton. The protein resides in the actin patch. The enzyme catalyses a 1,2-diacyl-sn-glycero-3-phosphate + H2O = a 1,2-diacyl-sn-glycerol + phosphate. It catalyses the reaction 1,2-di-(9Z-octadecenoyl)-sn-glycero-3-phosphate + H2O = 1,2-di-(9Z-octadecenoyl)-sn-glycerol + phosphate. Inhibited by N-ethylmaleimide. Its function is as follows. Mg(2+)-dependent phosphatidate (PA) phosphatase which catalyzes the dephosphorylation of PA to yield diacylglycerol. May play a role in vesicular trafficking through its PAP activity at cortical actin patches. Can also utilize diacylglycerol pyrophosphate and lyso-PA as substrates with specificity constants 4- and 7-fold lower, respectively, when compared with PA. This chain is Phosphatidate phosphatase APP1 (APP1), found in Saccharomyces cerevisiae (strain ATCC 204508 / S288c) (Baker's yeast).